We begin with the raw amino-acid sequence, 834 residues long: ATP-dependent DNA helicase fml1 (834 aa).

A Helicase ATP-binding domain is found at 80–248 (IVQKALFENV…NVIDSLHISR (169 aa)). 93–100 (LPTGLGKT) is an ATP binding site. The DEAH box signature appears at 196–199 (DEAH). Residues 416–582 (HLERIVTEYF…GLSLSEKSYR (167 aa)) form the Helicase C-terminal domain. An interaction with MHF complex region spans residues 650-690 (EESPFEICPVTYSIEQEKKLEKYKRVCLRGLDIHRNRRLSQ). Residues 738-769 (NSTDRDTKQPKMHDFRQPLHPNPMTTLKRKGQ) are disordered. Residues 740–754 (TDRDTKQPKMHDFRQ) are compositionally biased toward basic and acidic residues.

The protein belongs to the DEAD box helicase family. DEAH subfamily. FANCM sub-subfamily.

Its subcellular location is the cytoplasm. It is found in the nucleus. It localises to the nucleolus. It carries out the reaction ATP + H2O = ADP + phosphate + H(+). Functionally, ATP-dependent DNA helicase involved in DNA damage repair by homologous recombination and in genome maintenance. Capable of unwinding D-loops. Plays a role in limiting crossover recombination during mitotic DNA double-strand break (DSB) repair. Component of a FANCM-MHF complex which promotes gene conversion at blocked replication forks, probably by reversal of the stalled fork. FANCM-MHF also promotes non-crossover recombination in meiotic cells. The sequence is that of ATP-dependent DNA helicase fml1 from Schizosaccharomyces pombe (strain 972 / ATCC 24843) (Fission yeast).